The following is a 255-amino-acid chain: Placenta-expressed transcript 1 protein (255 aa).

An N-terminal signal peptide occupies residues 1 to 26 (MPALRTLLPHLGLFLCLALCFSPSFS). 3 N-linked (GlcNAc...) asparagine glycosylation sites follow: asparagine 57, asparagine 67, and asparagine 126. A lipid anchor (GPI-anchor amidated serine) is attached at serine 236. The propeptide at 237-255 (PLAGALHILLVFLISKLLF) is removed in mature form.

In terms of processing, N-glycosylated. GPI-anchored.

Its subcellular location is the apical cell membrane. In terms of biological role, modulates leading keratinocyte migration and cellular adhesion to matrix proteins during a wound-healing response and promotes wound repair. May play a role during trichilemmal differentiation of the hair follicle. This Rattus norvegicus (Rat) protein is Placenta-expressed transcript 1 protein (Plet1).